The sequence spans 3010 residues: Genome polyprotein (3010 aa).

S2 carries the N-acetylserine; by host modification. The tract at residues 2–23 (STNGKPQRKTKRNTNRRPQDVK) is interaction with STAT1. Positions 2–58 (STNGKPQRKTKRNTNRRPQDVKFPGGGQIVGGVYLLPRRGPRLGVRATRKTWERSQP) are interaction with EIF2AK2/PKR. The tract at residues 2–59 (STNGKPQRKTKRNTNRRPQDVKFPGGGQIVGGVYLLPRRGPRLGVRATRKTWERSQPR) is interaction with DDX3X. The segment at 2–75 (STNGKPQRKT…PKARQPEGRA (74 aa)) is disordered. The Cytoplasmic segment spans residues 2–168 (STNGKPQRKT…EDGVNYATGN (167 aa)). Short sequence motifs (nuclear localization signal) lie at residues 5–13 (GKPQRKTKR), 38–43 (PRRGPR), 58–64 (PRGRRQP), and 66–71 (PKARQP). The segment covering 7 to 16 (PQRKTKRNTN) has biased composition (basic residues). S99 carries the post-translational modification Phosphoserine; by host. Positions 112-152 (PRRRSRNLGKVIDTLTCGFADLMGYIPLVGAPLGGVARALA) are important for endoplasmic reticulum and mitochondrial localization. S116 is modified (phosphoserine; by host PKA). An interaction with APOA2 region spans residues 122 to 173 (VIDTLTCGFADLMGYIPLVGAPLGGVARALAHGVRVLEDGVNYATGNLPGCS). Positions 164-167 (YATG) are important for lipid droplets localization. Residues 169–189 (LPGCSFSIFLLALLSCLTIPA) traverse the membrane as a helical segment. A propeptide spans 178–191 (LLALLSCLTIPASA) (ER anchor for the core protein, removed in mature form by host signal peptidase). The Lumenal segment spans residues 190–358 (SAYEVHNVSG…GGAHWGVLAG (169 aa)). Residues N196, N209, N234, and N250 are each glycosylated (N-linked (GlcNAc...) asparagine; by host). Residues 265–296 (LVGAAAFCSAMYVGDLCGSVFLVSQLFTFSPR) form an important for fusion region. N305 carries N-linked (GlcNAc...) asparagine; by host glycosylation. The helical transmembrane segment at 359–379 (LAYYSMVGNWAKVLIVMLLFA) threads the bilayer. The Lumenal segment spans residues 380-725 (GVDGSTIVSG…WEYILLLFLL (346 aa)). Residues 385 to 411 (TIVSGGTVARTTHSLASLFTQGASQKI) form an HVR1 region. 4 N-linked (GlcNAc...) (high mannose) asparagine; by host glycosylation sites follow: N417, N423, N430, and N448. Cystine bridges form between C429-C552, C452-C459, C486-C494, and C503-C508. The tract at residues 474–479 (YTEADI) is HVR2. The segment at 480-493 (QDQRPYCWHYAPRP) is CD81-binding 1. A glycan (N-linked (GlcNAc...) (high mannose) asparagine; by host) is linked at N532. N540 is a glycosylation site (N-linked (GlcNAc...) asparagine; by host). The segment at 544 to 551 (PPQGNWFG) is CD81-binding 2. N556 is a glycosylation site (N-linked (GlcNAc...) (high mannose) asparagine; by host). The cysteines at positions 564 and 569 are disulfide-linked. N-linked (GlcNAc...) (high mannose) asparagine; by host glycosylation occurs at N576. 3 cysteine pairs are disulfide-bonded: C581–C585, C597–C620, and C607–C644. 2 N-linked (GlcNAc...) (high mannose) asparagine; by host glycosylation sites follow: N623 and N645. The cysteines at positions 652 and 677 are disulfide-linked. A PKR/eIF2-alpha phosphorylation homology domain (PePHD) region spans residues 660–671 (SELSPLLLSTTE). Residues 726–746 (LADARVCACLWMMLLIAQAEA) traverse the membrane as a helical segment. Topologically, residues 747 to 757 (ALENLVVFNAA) are lumenal. A helical membrane pass occupies residues 758–778 (SVAGMHGTLSFLVFFCAAWYI). Over 779 to 781 (KGR) the chain is Cytoplasmic. The helical transmembrane segment at 782 to 803 (LVPGAAYALYGVWPLLLLLLAL) threads the bilayer. The Lumenal portion of the chain corresponds to 804–813 (PPRAYAMDRE). Residues 814-834 (MAASCGGAVFVGLVLLTLSPH) traverse the membrane as a helical segment. The Cytoplasmic segment spans residues 835 to 838 (YKMF). A helical transmembrane segment spans residues 839–859 (LARLIWWLQYFITRAEAHLQV). Residues 860 to 881 (WIPPLNVRGGRDAIILLTCAAY) lie on the Lumenal side of the membrane. A helical transmembrane segment spans residues 882–902 (PELIFDITKILLAILGPLMVL). Residues 903-1026 (QAGLTRIPYF…SLEGRGWRLL (124 aa)) form the Peptidase C18 domain. Topologically, residues 903 to 1657 (QAGLTRIPYF…CMSADLEVVT (755 aa)) are cytoplasmic. The tract at residues 904–1206 (AGLTRIPYFV…PVESMETTMR (303 aa)) is protease NS2-3. C922 carries S-palmitoyl cysteine; by host lipidation. Residues 929-949 (AGGHYVQMALMKLAALTGTYV) are interaction with host SCPS1. Active-site for protease NS2 activity; shared with dimeric partner residues include H952, E972, and C993. Residues 1027-1208 (APITAYAQQT…ESMETTMRSP (182 aa)) enclose the Peptidase S29 domain. Residues H1083 and D1107 each act as charge relay system; for serine protease NS3 activity in the active site. Zn(2+)-binding residues include C1123 and C1125. S1165 functions as the Charge relay system; for serine protease NS3 activity in the catalytic mechanism. Residues C1171 and H1175 each contribute to the Zn(2+) site. Residues 1217-1369 (PAVPQAFQVA…PNIEEIALSN (153 aa)) form the Helicase ATP-binding domain. 1230 to 1237 (APTGSGKS) provides a ligand contact to ATP. Positions 1237 and 1317 each coordinate Mg(2+). A DECH box motif is present at residues 1316–1319 (DECH). The tract at residues 1486–1497 (QRRGRTSRGRRG) is RNA-binding. The chain crosses the membrane as a helical span at residues 1658–1678 (STWVLVGGVLAALAAYCLTTG). The NS3-binding stretch occupies residues 1679–1690 (SVVIVGRIILSG). The Cytoplasmic segment spans residues 1679 to 1805 (SVVIVGRIIL…SITSPLTTQS (127 aa)). The helical transmembrane segment at 1806-1824 (TLLFNILGGWVAAQLAPPG) threads the bilayer. Topologically, residues 1825 to 1828 (AASA) are lumenal. A helical membrane pass occupies residues 1829–1849 (FVGAGIAGAAVGSIGLGKVLV). A topological domain (cytoplasmic) is located at residue D1850. Residues 1851-1871 (MVAGYGAGVAGALVAFKVMSG) form a helical membrane-spanning segment. Residues 1872–1881 (EMPSTEDLVN) are Lumenal-facing. A helical transmembrane segment spans residues 1882-1902 (LLPAILSPGALVVGVVCAAIL). Topologically, residues 1903-1972 (RRHVDPGEGA…WINEDCSTPC (70 aa)) are cytoplasmic. Residues C1968 and C1972 are each lipidated (S-palmitoyl cysteine; by host). The stretch at 1973–2002 (SGSWLRDVWDWICTVLADFKTWLQSKLLPR) is an intramembrane region. The Cytoplasmic portion of the chain corresponds to 2003 to 2989 (LPGVPFFSCQ…YHSLSRARPR (987 aa)). Residues C2011, C2029, C2031, and C2052 each contribute to the Zn(2+) site. The segment at 2120-2208 (EFFTEVDGVR…ASSSASQLSA (89 aa)) is FKBP8-binding. The interval 2120 to 2332 (EFFTEVDGVR…PIPPPRRKRT (213 aa)) is transcriptional activation. Residues 2135–2139 (PACKP) are interaction with non-structural protein 4A. Residues 2189-2441 (RLARGSPPSL…PCAAEESKLP (253 aa)) are interaction with host SKP2. S2194 carries the post-translational modification Phosphoserine; by host; in p56. Phosphoserine; by host; in p58 occurs at positions 2197, 2201, 2204, 2207, and 2210. Residues 2210–2249 (SLKAACTTRHTPPDADLIEANLLWRQEMGGNITRVESENK) are ISDR. The interval 2210–2275 (SLKAACTTRH…REVSVPAEIL (66 aa)) is interaction with EIF2AK2/PKR. Residues 2249–2306 (KVVILDSFDPLRAEEDEREVSVPAEILRKSRKFPPALPVWARPDYNPPLLEPWKDPDY) form an NS4B-binding region. An SH3-binding motif is present at residues 2322 to 2325 (PPIP). A Nuclear localization signal motif is present at residues 2326–2334 (PPRRKRTVV). K2350 is covalently cross-linked (Glycyl lysine isopeptide (Lys-Gly) (interchain with G-Cter in ubiquitin)). The span at 2351–2367 (TFGSSESSAAGSGTATA) shows a compositional bias: low complexity. Residues 2351–2409 (TFGSSESSAAGSGTATAPPDQPSDDGDAGSDVESCSSMPPLEGEPGDPDLSDGSWSTVS) form a disordered region. The segment at 2354 to 2377 (SSESSAAGSGTATAPPDQPSDDGD) is V3. Phosphoserine; by host is present on residues S2448 and S2461. Residues 2633–2751 (PMGFSYDTRC…ICESAGTQED (119 aa)) form the RdRp catalytic domain. Mg(2+) contacts are provided by D2639, D2737, and D2738. A helical transmembrane segment spans residues 2990-3010 (WFMLCLLLLSVGVGIYLLPNR).

The protein belongs to the hepacivirus polyprotein family. In terms of assembly, homooligomer. Interacts with E1 (via C-terminus). Interacts with the non-structural protein 5A. Interacts (via N-terminus) with host STAT1 (via SH2 domain); this interaction results in decreased STAT1 phosphorylation and ubiquitin-mediated proteasome-dependent STAT1 degradation, leading to decreased IFN-stimulated gene transcription. Interacts with host STAT3; this interaction constitutively activates STAT3. Interacts with host LTBR receptor. Interacts with host TNFRSF1A receptor and possibly induces apoptosis. Interacts with host HNRPK. Interacts with host YWHAE. Interacts with host UBE3A/E6AP. Interacts with host DDX3X. Interacts with host APOA2. Interacts with host RXRA protein. Interacts with host SP110 isoform 3/Sp110b; this interaction sequesters the transcriptional corepressor SP110 away from the nucleus. Interacts with host CREB3 nuclear transcription protein; this interaction triggers cell transformation. Interacts with host ACY3. Interacts with host C1QR1. Interacts with host RBM24; this interaction, which enhances the interaction of the mature core protein with 5'-UTR, may inhibit viral translation and favor replication. Interacts with host EIF2AK2/PKR; this interaction induces the autophosphorylation of EIF2AK2. Part of the viral assembly initiation complex composed of NS2, E1, E2, NS3, NS4A, NS5A and the mature core protein. As to quaternary structure, forms a heterodimer with envelope glycoprotein E2. Interacts with mature core protein. Interacts with protease NS2. The heterodimer E1/E2 interacts with host CLDN1; this interaction plays a role in viral entry into host cell. Interacts with host SPSB2 (via C-terminus). Part of the viral assembly initiation complex composed of NS2, E1, E2, NS3, NS4A, NS5A and the mature core protein. Interacts with host NEURL3; this interaction prevents E1 binding to glycoprotein E2. Forms a heterodimer with envelope glycoprotein E1. Interacts with host CD81 and SCARB1 receptors; these interactions play a role in viral entry into host cell. Interacts with host EIF2AK2/PKR; this interaction inhibits EIF2AK2 and probably allows the virus to evade the innate immune response. Interacts with host CD209/DC-SIGN and CLEC4M/DC-SIGNR. Interact with host SPCS1; this interaction is essential for viral particle assembly. Interacts with protease NS2. The heterodimer E1/E2 interacts with host CLDN1; this interaction plays a role in viral entry into host cell. Part of the viral assembly initiation complex composed of NS2, E1, E2, NS3, NS4A, NS5A and the mature core protein. Interacts with host SLC3A2/4F2hc; the interaction may facilitate viral entry into host cell. Interacts with human PLSCR1. In terms of assembly, homohexamer. Homoheptamer. Interacts with protease NS2. As to quaternary structure, homodimer. Interacts with host SPCS1; this interaction is essential for viral particle assembly. Interacts with envelope glycoprotein E1. Interacts with envelope glycoprotein E2. Interacts with viroporin p7. Interacts with serine protease/helicase NS3. Part of the replication complex composed of NS2, NS3, NS4A, NS4B, NS5A and the RNA-directed RNA polymerase embedded in an ER-derived membranous web. Part of the viral assembly initiation complex composed of NS2, E1, E2, NS3, NS4A, NS5A and the mature core protein. Interacts with protease NS2. Interacts with non-structural protein 4A; this interaction stabilizes the folding of NS3 serine protease. NS3-NS4A interaction is essential for NS3 activation and allows membrane anchorage of the latter. NS3/NS4A complex also prevents phosphorylation of host IRF3, thus preventing the establishment of dsRNA induced antiviral state. Interacts with host MAVS; this interaction leads to the cleavage and inhibition of host MAVS. Interacts with host TICAM1; this interaction leads to the cleavage and inhibition of host TICAM1. Interacts with host TANK-binding kinase/TBK1; this interaction results in the inhibition of the association between TBK1 and IRF3, which leads to the inhibition of IRF3 activation. Interacts with host RBM24. Part of the replication complex composed of NS2, NS3, NS4A, NS4B, NS5A and the RNA-directed RNA polymerase embedded in an ER-derived membranous web. Part of the viral assembly initiation complex composed of NS2, E1, E2, NS3, NS4A, NS5A and the mature core protein. In terms of assembly, interacts with NS3 serine protease; this interaction stabilizes the folding of NS3 serine protease. NS3-NS4A interaction is essential for NS3 activation and allows membrane anchorage of the latter. Interacts with non-structural protein 5A (via N-terminus). Part of the replication complex composed of NS2, NS3, NS4A, NS4B, NS5A and the RNA-directed RNA polymerase embedded in an ER-derived membranous web. Part of the viral assembly initiation complex composed of NS2, E1, E2, NS3, NS4A, NS5A and the mature core protein. As to quaternary structure, homomultimer. Interacts with non-structural protein NS5A. Interacts with host PLA2G4C; this interaction likely initiates the recruitment of replication complexes to lipid droplets. Interacts with host STING; this interaction disrupts the interaction between STING and TBK1 thereby suppressing the interferon signaling. Part of the replication complex composed of NS2, NS3, NS4A, NS4B, NS5A and the RNA-directed RNA polymerase embedded in an ER-derived membranous web. Monomer. Homodimer; dimerization is required for RNA-binding. Interacts with the mature core protein. Interacts (via N-terminus) with non-structural protein 4A. Interacts with non-structural protein 4B. Interacts (via region D2) with RNA-directed RNA polymerase. Part of the viral assembly initiation complex composed of NS2, E1, E2, NS3, NS4A, NS5A and the mature core protein. Part of the replication complex composed of NS2, NS3, NS4A, NS4B, NS5A and the RNA-directed RNA polymerase embedded in an ER-derived membranous web. Interacts with host GRB2. Interacts with host BIN1. Interacts with host PIK3R1. Interacts with host SRCAP. Interacts with host FKBP8. Interacts (via C-terminus) with host VAPB (via MSP domain). Interacts with host EIF2AK2/PKR; this interaction leads to disruption of EIF2AK2 dimerization by NS5A and probably allows the virus to evade the innate immune response. Interacts (via N-terminus) with host PACSIN2 (via N-terminus); this interaction attenuates protein kinase C alpha-mediated phosphorylation of PACSIN2 by disrupting the interaction between PACSIN2 and PRKCA. Interacts (via N-terminus) with host SRC kinase (via SH2 domain). Interacts with most Src-family kinases. Interacts with host IFI27 and SKP2; promotes the ubiquitin-mediated proteasomal degradation of NS5A. Interacts with host GPS2. Interacts with host TNFRSF21; this interaction allows the modulation by the virus of JNK, p38 MAPK, STAT3, and Akt signaling pathways in a DR6-dependent manner. Interacts (via N-terminus) with host CIDEB (via N-terminus); this interaction seems to regulate the association of HCV particles with APOE. Interacts with host CHKA/Choline Kinase-alpha; CHKA bridges host PI4KA and NS5A and potentiates NS5A-stimulated PI4KA activity, which then facilitates the targeting of the ternary complex to the ER for viral replication. Interacts with host SPSB2 (via C-terminus); this interaction targets NS5A for ubiquitination and degradation. Interacts with host RAB18; this interaction may promote the association of NS5A and other replicase components with lipid droplets. Interacts (via region D2) with host PPIA/CYPA; the interaction stimulates RNA-binding ability of NS5A and is dependent on the peptidyl-prolyl cis-trans isomerase activity of PPIA/CYPA. Interacts with host TRIM14; this interaction induces the degradation of NS5A. In terms of assembly, homooligomer. Interacts with non-structural protein 5A. Interacts with host VAPB. Interacts with host PRK2/PKN2. Interacts with host HNRNPA1 and SEPT6; these interactions facilitate viral replication. Part of the replication complex composed of NS2, NS3, NS4A, NS4B, NS5A and the RNA-directed RNA polymerase. Zn(2+) is required as a cofactor. It depends on Mg(2+) as a cofactor. In terms of processing, specific enzymatic cleavages in vivo yield mature proteins. The structural proteins, core, E1, E2 and p7 are produced by proteolytic processing by host signal peptidases. The core protein precursor is synthesized as a 23 kDa, which is retained in the ER membrane through the hydrophobic signal peptide. Cleavage by the signal peptidase releases the 21 kDa mature core protein. The cleavage of the core protein precursor occurs between aminoacids 176 and 188 but the exact cleavage site is not known. Some degraded forms of the core protein appear as well during the course of infection. The other proteins (p7, NS2, NS3, NS4A, NS4B, NS5A and NS5B) are cleaved by the viral proteases. Autoprocessing between NS2 and NS3 is mediated by the NS2 cysteine protease catalytic domain and regulated by the NS3 N-terminal domain. Phosphorylated by host PKC and PKA. Post-translationally, ubiquitinated; mediated by UBE3A and leading to core protein subsequent proteasomal degradation. In terms of processing, highly N-glycosylated. Palmitoylation is required for NS2/3 autoprocessing and E2 recruitment to membranes. Post-translationally, palmitoylated. This modification may play a role in its polymerization or in protein-protein interactions. In terms of processing, phosphorylated on serines in a basal form termed p56. p58 is a hyperphosphorylated form of p56. p56 and p58 coexist in the cell in roughly equivalent amounts. Hyperphosphorylation is dependent on the presence of NS4A. Host CSNK1A1/CKI-alpha or RPS6KB1 kinases may be responsible for NS5A phosphorylation. Tyrosine phosphorylation is essential for the interaction with host SRC. Post-translationally, the N-terminus is phosphorylated by host PRK2/PKN2. In terms of processing, ubiquitinated. Ubiquitination, most probably at Lys-2350, mediated by host IFI27 and SKP2 leads to proteasomal degradation, restricting viral infection. Ubiquitination by host TRIM22 leads to interruption of viral replication.

Its subcellular location is the host endoplasmic reticulum membrane. The protein resides in the host mitochondrion membrane. It is found in the virion. The protein localises to the host cytoplasm. It localises to the host nucleus. Its subcellular location is the host lipid droplet. The protein resides in the virion membrane. It is found in the host mitochondrion. The protein localises to the host cell membrane. It localises to the host perinuclear region. It carries out the reaction Hydrolysis of four peptide bonds in the viral precursor polyprotein, commonly with Asp or Glu in the P6 position, Cys or Thr in P1 and Ser or Ala in P1'.. It catalyses the reaction a ribonucleoside 5'-triphosphate + H2O = a ribonucleoside 5'-diphosphate + phosphate + H(+). The catalysed reaction is ATP + H2O = ADP + phosphate + H(+). The enzyme catalyses RNA(n) + a ribonucleoside 5'-triphosphate = RNA(n+1) + diphosphate. Inhibited by the antiviral drug hexamethylene amiloride. Inhibition by amantadine appears to be genotype-dependent. Also inhibited by long-alkyl-chain iminosugar derivatives. With respect to regulation, activity is up-regulated by PRK2/PKN2-mediated phosphorylation. Its function is as follows. Packages viral RNA to form a viral nucleocapsid, and promotes virion budding. Participates in the viral particle production as a result of its interaction with the non-structural protein 5A. Binds RNA and may function as a RNA chaperone to induce the RNA structural rearrangements taking place during virus replication. Modulates viral translation initiation by interacting with viral IRES and 40S ribosomal subunit. Affects various cell signaling pathways, host immunity and lipid metabolism. Prevents the establishment of cellular antiviral state by blocking the interferon-alpha/beta (IFN-alpha/beta) and IFN-gamma signaling pathways and by blocking the formation of phosphorylated STAT1 and promoting ubiquitin-mediated proteasome-dependent degradation of STAT1. Activates STAT3 leading to cellular transformation. Regulates the activity of cellular genes, including c-myc and c-fos. May repress the promoter of p53, and sequester CREB3 and SP110 isoform 3/Sp110b in the cytoplasm. Represses cell cycle negative regulating factor CDKN1A, thereby interrupting an important check point of normal cell cycle regulation. Targets transcription factors involved in the regulation of inflammatory responses and in the immune response: suppresses TNF-induced NF-kappa-B activation, and activates AP-1. Binds to dendritic cells (DCs) via C1QR1, resulting in down-regulation of T-lymphocytes proliferation. Alters lipid metabolism by interacting with hepatocellular proteins involved in lipid accumulation and storage. Induces up-regulation of FAS promoter activity, and thereby contributes to the increased triglyceride accumulation in hepatocytes (steatosis). In terms of biological role, forms a heterodimer with envelope glycoprotein E2, which mediates virus attachment to the host cell, virion internalization through clathrin-dependent endocytosis and fusion with host membrane. Fusion with the host cell is most likely mediated by both E1 and E2, through conformational rearrangements of the heterodimer required for fusion rather than a classical class II fusion mechanism. E1/E2 heterodimer binds host apolipoproteins such as APOB and ApoE thereby forming a lipo-viro-particle (LVP). APOE associated to the LVP allows the initial virus attachment to cell surface receptors such as the heparan sulfate proteoglycans (HSPGs), syndecan-1 (SDC1), syndecan-1 (SDC2), the low-density lipoprotein receptor (LDLR) and scavenger receptor class B type I (SCARB1). The cholesterol transfer activity of SCARB1 allows E2 exposure and binding of E2 to SCARB1 and the tetraspanin CD81. E1/E2 heterodimer binding on CD81 activates the epithelial growth factor receptor (EGFR) signaling pathway. Diffusion of the complex E1-E2-EGFR-SCARB1-CD81 to the cell lateral membrane allows further interaction with Claudin 1 (CLDN1) and occludin (OCLN) to finally trigger HCV entry. Functionally, forms a heterodimer with envelope glycoprotein E1, which mediates virus attachment to the host cell, virion internalization through clathrin-dependent endocytosis and fusion with host membrane. Fusion with the host cell is most likely mediated by both E1 and E2, through conformational rearrangements of the heterodimer required for fusion rather than a classical class II fusion mechanism. The interaction between envelope glycoprotein E2 and host apolipoprotein E/APOE allows the proper assembly, maturation and infectivity of the viral particles. This interaction is probably promoted via the up-regulation of cellular autophagy by the virus. E1/E2 heterodimer binds host apolipoproteins such as APOB and APOE thereby forming a lipo-viro-particle (LVP). APOE associated to the LVP allows the initial virus attachment to cell surface receptors such as the heparan sulfate proteoglycans (HSPGs), syndecan-1 (SDC1), syndecan-1 (SDC2), the low-density lipoprotein receptor (LDLR) and scavenger receptor class B type I (SCARB1). The cholesterol transfer activity of SCARB1 allows E2 exposure and binding of E2 to SCARB1 and the tetraspanin CD81. E1/E2 heterodimer binding on CD81 activates the epithelial growth factor receptor (EGFR) signaling pathway. Diffusion of the complex E1-E2-EGFR-SCARB1-CD81 to the cell lateral membrane allows further interaction with Claudin 1 (CLDN1) and occludin (OCLN) to finally trigger HCV entry. Inhibits host EIF2AK2/PKR activation, preventing the establishment of an antiviral state. Viral ligand for CD209/DC-SIGN and CLEC4M/DC-SIGNR, which are respectively found on dendritic cells (DCs), and on liver sinusoidal endothelial cells and macrophage-like cells of lymph node sinuses. These interactions allow the capture of circulating HCV particles by these cells and subsequent facilitated transmission to permissive cells such as hepatocytes and lymphocyte subpopulations. The interaction between E2 and host amino acid transporter complex formed by SLC3A2 and SLC7A5/LAT1 may facilitate viral entry into host cell. Ion channel protein that acts as a viroporin and plays an essential role in the assembly, envelopment and secretion of viral particles. Regulates the host cell secretory pathway, which induces the intracellular retention of viral glycoproteins and favors assembly of viral particles. Creates a pore in acidic organelles and releases Ca(2+) and H(+) in the cytoplasm of infected cells, leading to a productive viral infection. High levels of cytoplasmic Ca(2+) may trigger membrane trafficking and transport of viral ER-associated proteins to viroplasms, sites of viral genome replication. This ionic imbalance induces the assembly of the inflammasome complex, which triggers the maturation of pro-IL-1beta into IL-1beta through the action of caspase-1. Targets also host mitochondria and induces mitochondrial depolarization. In addition of its role as a viroporin, acts as a lipid raft adhesion factor. Its function is as follows. Cysteine protease required for the proteolytic auto-cleavage between the non-structural proteins NS2 and NS3. The N-terminus of NS3 is required for the function of NS2 protease (active region NS2-3). Promotes the initiation of viral particle assembly by mediating the interaction between structural and non-structural proteins. In terms of biological role, displays three enzymatic activities: serine protease with a chymotrypsin-like fold, NTPase and RNA helicase. NS3 serine protease, in association with NS4A, is responsible for the cleavages of NS3-NS4A, NS4A-NS4B, NS4B-NS5A and NS5A-NS5B. The NS3/NS4A complex prevents phosphorylation of host IRF3, thus preventing the establishment of dsRNA induced antiviral state. The NS3/NS4A complex induces host amino acid transporter component SLC3A2, thus contributing to HCV propagation. NS3 RNA helicase binds to RNA and unwinds both dsDNA and dsRNA in the 3' to 5' direction, and likely resolves RNA complicated stable secondary structures in the template strand. Binds a single ATP and catalyzes the unzipping of a single base pair of dsRNA. Inhibits host antiviral proteins TBK1 and IRF3 thereby preventing the establishment of an antiviral state. Cleaves host MAVS/CARDIF thereby preventing the establishment of an antiviral state. Cleaves host TICAM1/TRIF, thereby disrupting TLR3 signaling and preventing the establishment of an antiviral state. Functionally, peptide cofactor which forms a non-covalent complex with the N-terminal of NS3 serine protease. The NS3/NS4A complex prevents phosphorylation of host IRF3, thus preventing the establishment of dsRNA induced antiviral state. The NS3/NS4A complex induces host amino acid transporter component SLC3A2, thus contributing to HCV propagation. Induces a specific membrane alteration that serves as a scaffold for the virus replication complex. This membrane alteration gives rise to the so-called ER-derived membranous web that contains the replication complex. NS4B self-interaction contributes to its function in membranous web formation. Promotes host TRIF protein degradation in a CASP8-dependent manner thereby inhibiting host TLR3-mediated interferon signaling. Disrupts the interaction between STING and TBK1 contributing to the inhibition of interferon signaling. Its function is as follows. Phosphorylated protein that is indispensable for viral replication and assembly. Both hypo- and hyperphosphorylated states are required for the viral life cycle. The hyperphosphorylated form of NS5A is an inhibitor of viral replication. Involved in RNA-binding and especially in binding to the viral genome. Zinc is essential for RNA-binding. Participates in the viral particle production as a result of its interaction with the mature viral core protein. Its interaction with host VAPB may target the viral replication complex to vesicles. Down-regulates viral IRES translation initiation. Mediates interferon resistance, presumably by interacting with and inhibiting host EIF2AK2/PKR. Prevents BIN1-induced apoptosis. Acts as a transcriptional activator of some host genes important for viral replication when localized in the nucleus. Via the interaction with host PACSIN2, modulates lipid droplet formation in order to promote virion assembly. Modulates TNFRSF21/DR6 signaling pathway for viral propagation. In terms of biological role, RNA-dependent RNA polymerase that performs primer-template recognition and RNA synthesis during viral replication. Initiates RNA transcription/replication at a flavin adenine dinucleotide (FAD), resulting in a 5'- FAD cap on viral RNAs. In this way, recognition of viral 5' RNA by host pattern recognition receptors can be bypassed, thereby evading activation of antiviral pathways. This chain is Genome polyprotein, found in Hepatitis C virus genotype 1b (isolate Taiwan) (HCV).